We begin with the raw amino-acid sequence, 438 residues long: Trigger factor (438 aa).

The PPIase FKBP-type domain maps to 162-247 (GDIVTIDFEG…VKDIKVKELP (86 aa)).

Belongs to the FKBP-type PPIase family. Tig subfamily.

The protein resides in the cytoplasm. The enzyme catalyses [protein]-peptidylproline (omega=180) = [protein]-peptidylproline (omega=0). In terms of biological role, involved in protein export. Acts as a chaperone by maintaining the newly synthesized protein in an open conformation. Functions as a peptidyl-prolyl cis-trans isomerase. This chain is Trigger factor, found in Caldicellulosiruptor bescii (strain ATCC BAA-1888 / DSM 6725 / KCTC 15123 / Z-1320) (Anaerocellum thermophilum).